The following is a 377-amino-acid chain: Guanine nucleotide-binding protein subunit beta (377 aa).

WD repeat units follow at residues 63–93, 105–135, 154–185, 202–233, 246–276, 293–323, and 339–369; these read GHTGKVYSLDWTPEKNRIVSASQDGRLIVWN, LPCAWVMTCAFSPSGHSVACGGLDSVCSIFN, GHKGYVSSCQYVPDEDTHLITSSGDQTCVLWD, GHTADVQSVSISSSNPRLFVSGSCDTTARLWD, CHEGDVNTVKFFPDGNRFGTGSEDGTCRLFD, GDIPHVTSMAFSISGRLLFVRYSNGDCYVWD, and SHEGXISCLGLSADGXXLCTGSWDTNLKIWA.

The protein belongs to the WD repeat G protein beta family. G proteins are composed of 3 units, alpha, beta and gamma.

It is found in the cell membrane. Its subcellular location is the endoplasmic reticulum membrane. Functionally, guanine nucleotide-binding proteins (G proteins) are involved as a modulator or transducer in various transmembrane signaling systems. The beta and gamma chains are required for the GTPase activity, for replacement of GDP by GTP, and for G protein-effector interaction. This Nicotiana plumbaginifolia (Leadwort-leaved tobacco) protein is Guanine nucleotide-binding protein subunit beta.